A 127-amino-acid polypeptide reads, in one-letter code: Large ribosomal subunit protein bL17 (127 aa).

It belongs to the bacterial ribosomal protein bL17 family. Part of the 50S ribosomal subunit. Contacts protein L32.

The chain is Large ribosomal subunit protein bL17 from Aeromonas hydrophila subsp. hydrophila (strain ATCC 7966 / DSM 30187 / BCRC 13018 / CCUG 14551 / JCM 1027 / KCTC 2358 / NCIMB 9240 / NCTC 8049).